Reading from the N-terminus, the 301-residue chain is Methionyl-tRNA formyltransferase (301 aa).

109-112 serves as a coordination point for (6S)-5,6,7,8-tetrahydrofolate; sequence SILP.

Belongs to the Fmt family.

It carries out the reaction L-methionyl-tRNA(fMet) + (6R)-10-formyltetrahydrofolate = N-formyl-L-methionyl-tRNA(fMet) + (6S)-5,6,7,8-tetrahydrofolate + H(+). Its function is as follows. Attaches a formyl group to the free amino group of methionyl-tRNA(fMet). The formyl group appears to play a dual role in the initiator identity of N-formylmethionyl-tRNA by promoting its recognition by IF2 and preventing the misappropriation of this tRNA by the elongation apparatus. The polypeptide is Methionyl-tRNA formyltransferase (Campylobacter curvus (strain 525.92)).